A 378-amino-acid chain; its full sequence is Quinolinate synthase (378 aa).

Residues histidine 59 and serine 80 each coordinate iminosuccinate. Position 125 (cysteine 125) interacts with [4Fe-4S] cluster. Residues 151 to 153 and serine 168 each bind iminosuccinate; that span reads YAN. Cysteine 212 serves as a coordination point for [4Fe-4S] cluster. Residues 238–240 and threonine 255 contribute to the iminosuccinate site; that span reads HPE. Cysteine 309 is a binding site for [4Fe-4S] cluster.

It belongs to the quinolinate synthase family. Type 1 subfamily. [4Fe-4S] cluster serves as cofactor.

The protein resides in the cytoplasm. The enzyme catalyses iminosuccinate + dihydroxyacetone phosphate = quinolinate + phosphate + 2 H2O + H(+). The protein operates within cofactor biosynthesis; NAD(+) biosynthesis; quinolinate from iminoaspartate: step 1/1. Its function is as follows. Catalyzes the condensation of iminoaspartate with dihydroxyacetone phosphate to form quinolinate. This is Quinolinate synthase from Burkholderia pseudomallei (strain 668).